We begin with the raw amino-acid sequence, 980 residues long: SLIT and NTRK-like protein 3 (980 aa).

The first 27 residues, 1–27 (MMKPSIAEMLHRGRMLWIILLSTIALG), serve as a signal peptide directing secretion. The Extracellular segment spans residues 30 to 655 (TPIPLIEDSE…SPPGGPVPLS (626 aa)). A glycan (N-linked (GlcNAc...) asparagine) is linked at Asn-69. LRR repeat units follow at residues 79 to 100 (RPFKLYLQRNSMRRLYTNSFLH), 103 to 124 (NAVSINLGNNALQDIQTGAFNG), 127 to 148 (ILKRLYLHENKLDVFRNDTFLG), 151 to 172 (SLEYLQADYNVIKRIESGAFRN), 175 to 196 (KLRVLILNDNLIPVLPTNLFKA), and 198 to 219 (SLTHLDLRGNRLKVLFYRGMLD). The LRRCT 1 domain occupies 233–284 (NPWNCTCEIVQLKSWLERIPYTALVGDITCETPFHFHGKDLREIKKTELCPL). Residues 326 to 361 (EYKSSNKQPKPTKQPRTPRPPSTSQALYPGPNQPPI) form a disordered region. In terms of domain architecture, LRRNT spans 365–407 (QTRPPIPIICPTGCTCNLHINDLGLTVNCKERGFNNISELLPR). 6 LRR repeats span residues 410–431 (NAKKLYLSSNLIQKIYRSDFWN), 434–455 (SLDLLHLGNNRISYVQDGAFIN), 458–479 (NLKSLFLNGNDIEKLTPGMFRG), 482–503 (SLHYLYFEFNVIREIQPAAFSL), 506–527 (NLKLLFLNNNLLRTLPTDAFAG), and 529–550 (SLARLNLRKNYFLYLPVAGVLE). Residues 563–614 (NPWDCTCDLVPFKQWIETISSVSVVGDVLCRTPENLTHRDVRTIELEVLCPE) form the LRRCT 2 domain. Asn-597 carries N-linked (GlcNAc...) asparagine glycosylation. The tract at residues 622 to 644 (GPSPPQPGDYHPNGGPTSASPYE) is disordered. A helical transmembrane segment spans residues 656–676 (VLILSLLVLFFSAVFVAAGLF). The Cytoplasmic segment spans residues 677-980 (AYVLRRRRKK…EVLEKTAYRF (304 aa)). 2 disordered regions span residues 709–735 (LFEDSGGNSGGSGGGGRPTLSSPEKAP) and 762–785 (EEEVAASAAQDTGATDRGGPGTQP). The span at 715 to 725 (GNSGGSGGGGR) shows a compositional bias: gly residues.

The protein belongs to the SLITRK family. Broadly expressed in embryonic brain with highest expression in cortical plate, pyramidal cell layer of the hippocampus, thalamus and hypothalamus.

The protein resides in the membrane. Functionally, suppresses neurite outgrowth. This is SLIT and NTRK-like protein 3 (Slitrk3) from Mus musculus (Mouse).